Reading from the N-terminus, the 344-residue chain is Phenylalanine--tRNA ligase alpha subunit (344 aa).

Glu-255 lines the Mg(2+) pocket.

Belongs to the class-II aminoacyl-tRNA synthetase family. Phe-tRNA synthetase alpha subunit type 1 subfamily. In terms of assembly, tetramer of two alpha and two beta subunits. Mg(2+) is required as a cofactor.

It localises to the cytoplasm. It carries out the reaction tRNA(Phe) + L-phenylalanine + ATP = L-phenylalanyl-tRNA(Phe) + AMP + diphosphate + H(+). The chain is Phenylalanine--tRNA ligase alpha subunit from Persephonella marina (strain DSM 14350 / EX-H1).